The chain runs to 493 residues: Probable cytosol aminopeptidase (493 aa).

2 residues coordinate Mn(2+): K258 and D263. The active site involves K270. Residues D281, D340, and E342 each coordinate Mn(2+). Residue R344 is part of the active site.

Belongs to the peptidase M17 family. It depends on Mn(2+) as a cofactor.

It localises to the cytoplasm. The catalysed reaction is Release of an N-terminal amino acid, Xaa-|-Yaa-, in which Xaa is preferably Leu, but may be other amino acids including Pro although not Arg or Lys, and Yaa may be Pro. Amino acid amides and methyl esters are also readily hydrolyzed, but rates on arylamides are exceedingly low.. It carries out the reaction Release of an N-terminal amino acid, preferentially leucine, but not glutamic or aspartic acids.. Functionally, presumably involved in the processing and regular turnover of intracellular proteins. Catalyzes the removal of unsubstituted N-terminal amino acids from various peptides. The chain is Probable cytosol aminopeptidase from Caulobacter vibrioides (strain ATCC 19089 / CIP 103742 / CB 15) (Caulobacter crescentus).